Here is a 471-residue protein sequence, read N- to C-terminus: Chromosomal replication initiator protein DnaA (471 aa).

The domain I, interacts with DnaA modulators stretch occupies residues 1–91 (MVDVSETTER…KYWQDESDAV (91 aa)). Positions 91 to 133 (VYSVDICVSDGVGVQPQMAEHPDGAVDGPPVVMVGGTYDHLSS) are domain II. The domain III, AAA+ region stretch occupies residues 134-352 (PLDPRFTFDN…GALNKVVAHS (219 aa)). ATP-binding residues include G180, G182, K183, and T184. The interval 353–471 (SLVGRSVTIE…DINLLIRMLR (119 aa)) is domain IV, binds dsDNA.

Belongs to the DnaA family. In terms of assembly, oligomerizes as a right-handed, spiral filament on DNA at oriC.

It is found in the cytoplasm. Its function is as follows. Plays an essential role in the initiation and regulation of chromosomal replication. ATP-DnaA binds to the origin of replication (oriC) to initiate formation of the DNA replication initiation complex once per cell cycle. Binds the DnaA box (a 9 base pair repeat at the origin) and separates the double-stranded (ds)DNA. Forms a right-handed helical filament on oriC DNA; dsDNA binds to the exterior of the filament while single-stranded (ss)DNA is stabiized in the filament's interior. The ATP-DnaA-oriC complex binds and stabilizes one strand of the AT-rich DNA unwinding element (DUE), permitting loading of DNA polymerase. After initiation quickly degrades to an ADP-DnaA complex that is not apt for DNA replication. Binds acidic phospholipids. The polypeptide is Chromosomal replication initiator protein DnaA (Anaplasma marginale (strain St. Maries)).